The primary structure comprises 316 residues: Pantothenate kinase (316 aa).

Residue 95 to 102 coordinates ATP; that stretch reads GSVSVGKS.

This sequence belongs to the prokaryotic pantothenate kinase family.

It is found in the cytoplasm. The catalysed reaction is (R)-pantothenate + ATP = (R)-4'-phosphopantothenate + ADP + H(+). It participates in cofactor biosynthesis; coenzyme A biosynthesis; CoA from (R)-pantothenate: step 1/5. The sequence is that of Pantothenate kinase from Haemophilus ducreyi (strain 35000HP / ATCC 700724).